We begin with the raw amino-acid sequence, 74 residues long: Sec-independent protein translocase protein TatA (74 aa).

Residues 1–21 form a helical membrane-spanning segment; that stretch reads MGSFSIWHWLIVLLIVVLVFG.

Belongs to the TatA/E family. As to quaternary structure, the Tat system comprises two distinct complexes: a TatABC complex, containing multiple copies of TatA, TatB and TatC subunits, and a separate TatA complex, containing only TatA subunits. Substrates initially bind to the TatABC complex, which probably triggers association of the separate TatA complex to form the active translocon.

The protein resides in the cell inner membrane. Its function is as follows. Part of the twin-arginine translocation (Tat) system that transports large folded proteins containing a characteristic twin-arginine motif in their signal peptide across membranes. TatA could form the protein-conducting channel of the Tat system. The chain is Sec-independent protein translocase protein TatA from Nitrosospira multiformis (strain ATCC 25196 / NCIMB 11849 / C 71).